The following is a 2677-amino-acid chain: Probable helicase senataxin (2677 aa).

Residue lysine 339 forms a Glycyl lysine isopeptide (Lys-Gly) (interchain with G-Cter in SUMO1) linkage. A phosphoserine mark is found at serine 615, serine 642, and serine 878. A Glycyl lysine isopeptide (Lys-Gly) (interchain with G-Cter in SUMO2) cross-link involves residue lysine 894. Phosphoserine is present on residues serine 911, serine 947, serine 956, serine 1017, and serine 1019. Glycyl lysine isopeptide (Lys-Gly) (interchain with G-Cter in SUMO2) cross-links involve residues lysine 1056 and lysine 1063. Disordered regions lie at residues 1158 to 1219 (KKPK…TTVS) and 1237 to 1258 (PVSK…RSSN). Over residues 1176–1187 (PSSSVRNEGQSD) the composition is skewed to polar residues. A compositionally biased stretch (basic and acidic residues) spans 1188–1205 (TNKRDLVGNDFKSIDRRT). Positions 1206-1219 (STPNSRIQRATTVS) are enriched in polar residues. Residue serine 1330 is modified to Phosphoserine. Residues lysine 1340 and lysine 1341 each participate in a glycyl lysine isopeptide (Lys-Gly) (interchain with G-Cter in SUMO2) cross-link. The interval 1351–1385 (QRQIRPKSQKNRRRLSDCESTDVKRAGSHTAQNSD) is disordered. Residues 1354–1363 (IRPKSQKNRR) show a composition bias toward basic residues. Basic and acidic residues predominate over residues 1364 to 1375 (RLSDCESTDVKR). Phosphoserine is present on serine 1366. Residue lysine 1415 forms a Glycyl lysine isopeptide (Lys-Gly) (interchain with G-Cter in SUMO2) linkage. Serine 1489 carries the phosphoserine modification. Positions 1579-1604 (FRKPGLPPPASKPLRPTTKIFSSKST) are disordered. Residues serine 1621, serine 1623, and serine 1663 each carry the phosphoserine modification. 1963–1970 (GPPGTGKS) contacts ATP. The Bipartite nuclear localization signal signature appears at 2070–2087 (KKELPSHVQAMHKRKEFL). Residues 2105–2136 (REIQRQELDENISKVSKERQELASKIKEVQGR) adopt a coiled-coil conformation. Residue threonine 2474 is modified to Phosphothreonine. Disordered regions lie at residues 2474–2496 (THPP…SKLD), 2556–2577 (WDPQ…EPGF), and 2597–2677 (LSSH…RKLL). The span at 2560 to 2573 (PSSPQHPGATPPTG) shows a compositional bias: pro residues. Residues 2628-2671 (ELCHRREARAFSEGEQEKCGSETHHTRRNSRWDKRTLEQEDSSS) show a composition bias toward basic and acidic residues. The tract at residues 2661–2677 (KRTLEQEDSSSKKRKLL) is necessary for nuclear localization.

It belongs to the DNA2/NAM7 helicase family. Homodimer. Interacts with PER2; the interaction inhibits termination of circadian target genes. Interacts with CHD4, POLR2A, PRKDC and TRIM28. Interacts with UBE2I. Interacts (via N-terminus domain) with EXOSC9 (via C-terminus region); the interaction enhances SETX sumoylation. Interacts with NCL (via N-terminus domain). Interacts with PABPN1, PABPC1 and SF3B1. Interacts with SMN1/SMN2 and POLR2A; SMN1/SMN2 recruits SETX to POLR2A. Post-translationally, ubiquitinated. In terms of processing, sumoylated preferentially with SUMO2 or SUMO3. Highly expressed in skeletal muscle. Expressed in heart, fibroblast, placenta and liver. Weakly expressed in brain and lung. Expressed in the cortex of the kidney (highly expressed in tubular epithelial cells but low expression in the glomerulus).

It is found in the nucleus. The protein resides in the nucleoplasm. It localises to the nucleolus. The protein localises to the cytoplasm. Its subcellular location is the chromosome. It is found in the telomere. The protein resides in the cell projection. It localises to the axon. The protein localises to the growth cone. Functionally, probable RNA/DNA helicase involved in diverse aspects of RNA metabolism and genomic integrity. Plays a role in transcription regulation by its ability to modulate RNA Polymerase II (Pol II) binding to chromatin and through its interaction with proteins involved in transcription. Contributes to the mRNA splicing efficiency and splice site selection. Required for the resolution of R-loop RNA-DNA hybrid formation at G-rich pause sites located downstream of the poly(A) site, allowing XRN2 recruitment and XRN2-mediated degradation of the downstream cleaved RNA and hence efficient RNA polymerase II (RNAp II) transcription termination. Required for the 3' transcriptional termination of PER1 and CRY2, thus playing an important role in the circadian rhythm regulation. Involved in DNA double-strand breaks damage response generated by oxidative stress. In association with RRP45, targets the RNA exosome complex to sites of transcription-induced DNA damage. Plays a role in the development and maturation of germ cells: essential for male meiosis, acting at the interface of transcription and meiotic recombination, and in the process of gene silencing during meiotic sex chromosome inactivation (MSCI). May be involved in telomeric stability through the regulation of telomere repeat-containing RNA (TERRA) transcription. Plays a role in neurite outgrowth in hippocampal cells through FGF8-activated signaling pathways. Inhibits retinoic acid-induced apoptosis. This chain is Probable helicase senataxin, found in Homo sapiens (Human).